We begin with the raw amino-acid sequence, 341 residues long: Trans-3-hydroxy-L-proline dehydratase (341 aa).

Residue Ser-90 is the Proton acceptor of the active site. Residues 91 to 92, Asp-252, and 257 to 258 each bind substrate; these read GS and GT.

It belongs to the proline racemase family.

The enzyme catalyses trans-3-hydroxy-L-proline = 1-pyrroline-2-carboxylate + H2O. Functionally, catalyzes the dehydration of trans-3-hydroxy-L-proline (t3LHyp) to Delta(1)-pyrroline-2-carboxylate (Pyr2C). May be involved in a degradation pathway of t3LHyp, which would allow L.aggregata to grow on t3LHyp as a sole carbon source. Displays neither proline racemase activity nor 4-hydroxyproline 2-epimerase activity. In Roseibium aggregatum (strain ATCC 25650 / DSM 13394 / JCM 20685 / NBRC 16684 / NCIMB 2208 / IAM 12614 / B1) (Stappia aggregata), this protein is Trans-3-hydroxy-L-proline dehydratase.